We begin with the raw amino-acid sequence, 1004 residues long: Protein phosphatase 1 regulatory subunit 12A (1004 aa).

The segment at 35 to 38 (KVKF) is important for interaction with PPP1CB. 6 ANK repeats span residues 39–68 (DDGAVFLAACSSGDTEEVLRLLERGADINY), 72–101 (DGLTALHQACIDDNVDMVKFLVENGANINQ), 105–134 (EGWIPLHAAASCGYLDIAEYLISQGAHVGA), 138–164 (EGDTPLDIAEEEAMEELLQNEVNRQGV), 198–227 (SGGTALHVAAAKGYTEVLKLLIQARYDVNI), and 231–260 (DGWTPLHAAAHWGKEEACRILVENLCDMEA). The span at 291-300 (HSEKREKKSP) shows a compositional bias: basic and acidic residues. The tract at residues 291-920 (HSEKREKKSP…SYLEDRKPYC (630 aa)) is disordered. Over residues 302–316 (IESTANLDNNQTQKT) the composition is skewed to polar residues. Composition is skewed to basic and acidic residues over residues 318 to 329 (KNKETLIMEQEK) and 336 to 353 (SLEHEKADEEEEGKKDES). A compositionally biased stretch (acidic residues) spans 357-369 (SEEEEDDDSESEA). Positions 378-392 (ANANTTSTQSASMTA) are enriched in polar residues. A compositionally biased stretch (basic and acidic residues) spans 417–427 (SPKEEERKDES). The span at 464–475 (RSASSPRLSSSL) shows a compositional bias: low complexity. Residues 476 to 486 (DNKEKEKDGKG) are compositionally biased toward basic and acidic residues. Over residues 514-525 (SSASSIRSGSSY) the composition is skewed to low complexity. Positions 528-538 (RKWEEDVKKNS) are enriched in basic and acidic residues. Positions 539–554 (LNEGPTSLNTSYQRSG) are enriched in polar residues. 2 stretches are compositionally biased toward low complexity: residues 564 to 578 (VSSNVPSTASTVTSS) and 587 to 602 (ASANTTTKSTTGSTSA). The span at 613–624 (WAEDSTEKEKDS) shows a compositional bias: basic and acidic residues. Low complexity predominate over residues 625-659 (VPTAVTVPVAPSVVNAAATTTAMTTATSGTVSSTS). Basic and acidic residues predominate over residues 672–681 (VRDEESESQR). Over residues 682–692 (KARSRQARQSR) the composition is skewed to basic residues. A Phosphothreonine; by ROCK2 modification is found at Thr695. Residues 717–765 (RTREQENEEKEKEEKEKQDKEKQEEKKESETKDDDYRQRYSRTVEEPYH) are compositionally biased toward basic and acidic residues. A compositionally biased stretch (low complexity) spans 770–793 (TSTSTSTSSTSSLSTSTSSLSSSS). Residues 794 to 808 (QLNRPNSLIGITSAY) are compositionally biased toward polar residues. A compositionally biased stretch (basic and acidic residues) spans 812–837 (GTKESEREGGKKEEEKEEDKSQPKSI). Positions 838–849 (RERRRPREKRRS) are enriched in basic residues. The residue at position 850 (Thr850) is a Phosphothreonine; by ROCK2. The span at 864–880 (QEHQSDSEEGTNKKETQ) shows a compositional bias: basic and acidic residues. Polar residues predominate over residues 881–896 (SDSLSRYDTGSLSVSS).

In terms of assembly, PP1 comprises a catalytic subunit, PPP1CA, PPP1CB or PPP1CC, and one or several targeting or regulatory subunits. PPP1R12A mediates binding to myosin. In terms of processing, phosphorylated by CIT (Rho-associated kinase) and by ROCK2 on serine and threonine residues. Phosphorylation at Thr-695 leads to inhibition of myosin phosphatase activity. Phosphorylation at Thr-850 abolishes myosin binding. May be phosphorylated at Thr-695 by DMPK; may inhibit the myosin phosphatase activity. As to expression, detected in brain, lung, aorta, heart, gizzard, stomach, oviduct, spleen, kidney and small intestine.

The protein resides in the cytoplasm. Its subcellular location is the cytoskeleton. It localises to the stress fiber. Regulates myosin phosphatase activity. The sequence is that of Protein phosphatase 1 regulatory subunit 12A (PPP1R12A) from Gallus gallus (Chicken).